The chain runs to 273 residues: NH(3)-dependent NAD(+) synthetase (273 aa).

34 to 41 (GLSGGIDS) is an ATP binding site. Mg(2+) is bound at residue Asp40. Arg116 is a binding site for deamido-NAD(+). An ATP-binding site is contributed by Thr136. Position 141 (Glu141) interacts with Mg(2+). Residues Lys165 and Ser187 each contribute to the ATP site.

Belongs to the NAD synthetase family. As to quaternary structure, homodimer.

The catalysed reaction is deamido-NAD(+) + NH4(+) + ATP = AMP + diphosphate + NAD(+) + H(+). It functions in the pathway cofactor biosynthesis; NAD(+) biosynthesis; NAD(+) from deamido-NAD(+) (ammonia route): step 1/1. Catalyzes the ATP-dependent amidation of deamido-NAD to form NAD. Uses ammonia as a nitrogen source. This is NH(3)-dependent NAD(+) synthetase from Trichlorobacter lovleyi (strain ATCC BAA-1151 / DSM 17278 / SZ) (Geobacter lovleyi).